The primary structure comprises 374 residues: Chaperone protein DnaJ (374 aa).

The J domain maps to 5-70 (DYYEVLGVAR…DKRARYDRFG (66 aa)). A CR-type zinc finger spans residues 135–213 (GDEVTLRLPK…CKGSGILQQV (79 aa)). Zn(2+)-binding residues include cysteine 148, cysteine 151, cysteine 165, cysteine 168, cysteine 187, cysteine 190, cysteine 201, and cysteine 204. CXXCXGXG motif repeat units follow at residues 148 to 155 (CDECNGSG), 165 to 172 (CRHCGGNG), 187 to 194 (CPVCRGEG), and 201 to 208 (CPKCKGSG).

This sequence belongs to the DnaJ family. As to quaternary structure, homodimer. It depends on Zn(2+) as a cofactor.

It is found in the cytoplasm. Participates actively in the response to hyperosmotic and heat shock by preventing the aggregation of stress-denatured proteins and by disaggregating proteins, also in an autonomous, DnaK-independent fashion. Unfolded proteins bind initially to DnaJ; upon interaction with the DnaJ-bound protein, DnaK hydrolyzes its bound ATP, resulting in the formation of a stable complex. GrpE releases ADP from DnaK; ATP binding to DnaK triggers the release of the substrate protein, thus completing the reaction cycle. Several rounds of ATP-dependent interactions between DnaJ, DnaK and GrpE are required for fully efficient folding. Also involved, together with DnaK and GrpE, in the DNA replication of plasmids through activation of initiation proteins. In Nitratidesulfovibrio vulgaris (strain DSM 19637 / Miyazaki F) (Desulfovibrio vulgaris), this protein is Chaperone protein DnaJ.